We begin with the raw amino-acid sequence, 163 residues long: UPF0763 protein JJD26997_0796 (163 aa).

Belongs to the UPF0763 family.

This chain is UPF0763 protein JJD26997_0796, found in Campylobacter jejuni subsp. doylei (strain ATCC BAA-1458 / RM4099 / 269.97).